The sequence spans 313 residues: Homeobox protein knotted-1-like 2 (313 aa).

The segment at 13-40 (DPSSAAASSPNPSFSPGGGGGGGVGGGE) is disordered. Positions 14–27 (PSSAAASSPNPSFS) are enriched in low complexity. Positions 28–38 (PGGGGGGGVGG) are enriched in gly residues. Residues 205 to 225 (ELKNELKQGYKEKLVDIREEI) enclose the ELK domain. A DNA-binding region (homeobox; TALE-type) is located at residues 226–289 (LRKRRAGKLP…NQRKRNWHSN (64 aa)). The segment at 282–313 (RKRNWHSNPASSGEKTKKKRNVTGDGGAEQSW) is disordered.

Belongs to the TALE/KNOX homeobox family. As to expression, isoform 1 is expressed in roots, leaf blades, leaf sheaths and flowers. Isoform 2 is expressed in leaf blades, leaf sheaths and flowers.

It is found in the nucleus. This is Homeobox protein knotted-1-like 2 (HOS58) from Oryza sativa subsp. japonica (Rice).